The sequence spans 395 residues: S-adenosylmethionine synthase (395 aa).

Position 16 (His-16) interacts with ATP. Position 18 (Asp-18) interacts with Mg(2+). K(+) is bound at residue Glu-44. Glu-57 and Gln-100 together coordinate L-methionine. A flexible loop region spans residues Gln-100–Glu-110. Residues Asp-174–Lys-176, Arg-241–Phe-242, Asp-250, Arg-256–Lys-257, Ala-273, and Lys-277 contribute to the ATP site. L-methionine is bound at residue Asp-250. Lys-281 serves as a coordination point for L-methionine.

Belongs to the AdoMet synthase family. In terms of assembly, homotetramer; dimer of dimers. The cofactor is Mg(2+). K(+) serves as cofactor.

The protein resides in the cytoplasm. The catalysed reaction is L-methionine + ATP + H2O = S-adenosyl-L-methionine + phosphate + diphosphate. It participates in amino-acid biosynthesis; S-adenosyl-L-methionine biosynthesis; S-adenosyl-L-methionine from L-methionine: step 1/1. Functionally, catalyzes the formation of S-adenosylmethionine (AdoMet) from methionine and ATP. The overall synthetic reaction is composed of two sequential steps, AdoMet formation and the subsequent tripolyphosphate hydrolysis which occurs prior to release of AdoMet from the enzyme. In Streptococcus uberis (strain ATCC BAA-854 / 0140J), this protein is S-adenosylmethionine synthase.